Reading from the N-terminus, the 86-residue chain is MATSHSLGEKILVKLIRFYQLAISPMIGPRCRFTPTCSCYGIEAIKTHGALKGSWLTLKRILKCHPLSKGGYDPVPPKINNNVEKK.

It belongs to the UPF0161 family.

The protein localises to the cell inner membrane. In terms of biological role, could be involved in insertion of integral membrane proteins into the membrane. The sequence is that of Putative membrane protein insertion efficiency factor from Mannheimia succiniciproducens (strain KCTC 0769BP / MBEL55E).